Here is a 389-residue protein sequence, read N- to C-terminus: Alanine racemase (389 aa).

The active-site Proton acceptor; specific for D-alanine is the K48. The residue at position 48 (K48) is an N6-(pyridoxal phosphate)lysine. R144 serves as a coordination point for substrate. The active-site Proton acceptor; specific for L-alanine is the Y281. M329 contributes to the substrate binding site.

Belongs to the alanine racemase family. Pyridoxal 5'-phosphate serves as cofactor.

It carries out the reaction L-alanine = D-alanine. Its pathway is amino-acid biosynthesis; D-alanine biosynthesis; D-alanine from L-alanine: step 1/1. Functionally, catalyzes the interconversion of L-alanine and D-alanine. May also act on other amino acids. This Leptospira interrogans serogroup Icterohaemorrhagiae serovar Lai (strain 56601) protein is Alanine racemase (alr).